We begin with the raw amino-acid sequence, 352 residues long: Probable protein phosphatase 2C 56 (352 aa).

Disordered stretches follow at residues 18–37 and 53–87; these read RGRRVAASPSPGGTPAASRG and SSSSFAPPRMQARRAAGSAARTRSPSQSNGWITGG. Composition is skewed to low complexity over residues 23–37 and 53–75; these read AASPSPGGTPAASRG and SSSSFAPPRMQARRAAGSAARTR. A PPM-type phosphatase domain is found at 96-343; the sequence is SWDYSSFKGR…DNITCIVLQF (248 aa). 4 residues coordinate Mn(2+): Asp-132, Gly-133, Asp-295, and Asp-334.

This sequence belongs to the PP2C family. Mg(2+) is required as a cofactor. It depends on Mn(2+) as a cofactor.

It carries out the reaction O-phospho-L-seryl-[protein] + H2O = L-seryl-[protein] + phosphate. It catalyses the reaction O-phospho-L-threonyl-[protein] + H2O = L-threonyl-[protein] + phosphate. In Oryza sativa subsp. japonica (Rice), this protein is Probable protein phosphatase 2C 56.